The following is a 283-amino-acid chain: Aspartate dehydrogenase domain-containing protein (283 aa).

Ser-20 and Ser-168 each carry phosphoserine.

It belongs to the L-aspartate dehydrogenase family.

This Homo sapiens (Human) protein is Aspartate dehydrogenase domain-containing protein.